The chain runs to 406 residues: UPF0754 membrane protein CYB_2931 (406 aa).

Transmembrane regions (helical) follow at residues 1-21 and 385-405; these read MAFW…YFTN and IVNL…LFLL.

This sequence belongs to the UPF0754 family.

The protein localises to the cell inner membrane. The protein is UPF0754 membrane protein CYB_2931 of Synechococcus sp. (strain JA-2-3B'a(2-13)) (Cyanobacteria bacterium Yellowstone B-Prime).